A 341-amino-acid polypeptide reads, in one-letter code: Phenylalanine--tRNA ligase alpha subunit (341 aa).

A Mg(2+)-binding site is contributed by E256.

The protein belongs to the class-II aminoacyl-tRNA synthetase family. Phe-tRNA synthetase alpha subunit type 1 subfamily. Tetramer of two alpha and two beta subunits. It depends on Mg(2+) as a cofactor.

It localises to the cytoplasm. The enzyme catalyses tRNA(Phe) + L-phenylalanine + ATP = L-phenylalanyl-tRNA(Phe) + AMP + diphosphate + H(+). This chain is Phenylalanine--tRNA ligase alpha subunit, found in Chlamydia abortus (strain DSM 27085 / S26/3) (Chlamydophila abortus).